We begin with the raw amino-acid sequence, 266 residues long: MAPVPEPINEMMAYYSDENELLFEADGPKQMKSCIQHLDLGSVEVGNIQLQISHQLYNKSFRQVVSVIVAMEKLRNSAYAHVFHDDDLRNVLSFIFEEEPVIFETSSDEFLCDAAVQSVNCKLQDREQNSLVLASPCVLKALHLLSQEMSREVVFCMSFVQAEERDNKIPVALGIRDKNQYLSCVKKGDTPTLQLEEVDPKVYPKRNMEKRFVFYKTEIKDTVEFESVLYPNWYISTSHPEEKPVFLGHFRGGQDITDFRMETLSP.

Positions M1 to D113 are excised as a propeptide.

This sequence belongs to the IL-1 family. Monomer. In its precursor form, weakly interacts with full-length MEFV; the mature cytokine does not interact at all. Interacts with integrins ITGAV:ITGBV and ITGA5:ITGB1; integrin-binding is required for IL1B signaling. Interacts with cargo receptor TMED10; the interaction is direct and is required for the secretion of IL1B mature form. Interacts with HSP90AB1; the interaction facilitates cargo translocation into the ERGIC. Interacts with HSP90B1; the interaction facilitates cargo translocation into the ERGIC.

It localises to the cytoplasm. The protein localises to the cytosol. The protein resides in the secreted. It is found in the lysosome. Its subcellular location is the extracellular exosome. Functionally, potent pro-inflammatory cytokine. Initially discovered as the major endogenous pyrogen, induces prostaglandin synthesis, neutrophil influx and activation, T-cell activation and cytokine production, B-cell activation and antibody production, and fibroblast proliferation and collagen production. Promotes Th17 differentiation of T-cells. Synergizes with IL12/interleukin-12 to induce IFNG synthesis from T-helper 1 (Th1) cells. Plays a role in angiogenesis by inducing VEGF production synergistically with TNF and IL6. Involved in transduction of inflammation downstream of pyroptosis: its mature form is specifically released in the extracellular milieu by passing through the gasdermin-D (GSDMD) pore. The chain is Interleukin-1 beta (IL1B) from Cervus elaphus (Red deer).